We begin with the raw amino-acid sequence, 227 residues long: GFP-like non-fluorescent chromoprotein (227 aa).

The 2-iminomethyl-5-imidazolinone (Glu-Gly) cross-link spans 63 to 65 (EYG). 2,3-didehydrotyrosine is present on Y64.

The protein belongs to the GFP family. Homotetramer. In terms of processing, contains a chromophore consisting of modified amino acid residues. The chromophore is formed by autocatalytic backbone condensation between Xaa-N and Gly-(N+2), oxidation of Tyr-(N+1) to didehydrotyrosine, and formation of a double bond to the alpha-amino nitrogen of residue Xaa-N. Maturation of the chromophore requires nothing other than molecular oxygen. The precise stereochemistry of the tyrosine has not been determined.

Functionally, non-fluorescent pigment protein that is lilac in color. This chain is GFP-like non-fluorescent chromoprotein, found in Radianthus crispa (Leathery sea anemone).